A 564-amino-acid polypeptide reads, in one-letter code: Threonine--tRNA ligase (564 aa).

The segment at 167-464 (DHRSLGKQLE…LLEKTSGNFP (298 aa)) is catalytic. Residues Cys-260, His-311, and His-441 each contribute to the Zn(2+) site.

Belongs to the class-II aminoacyl-tRNA synthetase family. As to quaternary structure, homodimer. The cofactor is Zn(2+).

It is found in the cytoplasm. The catalysed reaction is tRNA(Thr) + L-threonine + ATP = L-threonyl-tRNA(Thr) + AMP + diphosphate + H(+). Its function is as follows. Catalyzes the attachment of threonine to tRNA(Thr) in a two-step reaction: L-threonine is first activated by ATP to form Thr-AMP and then transferred to the acceptor end of tRNA(Thr). Also edits incorrectly charged L-seryl-tRNA(Thr). The polypeptide is Threonine--tRNA ligase (Mycoplasma genitalium (strain ATCC 33530 / DSM 19775 / NCTC 10195 / G37) (Mycoplasmoides genitalium)).